A 301-amino-acid polypeptide reads, in one-letter code: Glycine--tRNA ligase alpha subunit (301 aa).

This sequence belongs to the class-II aminoacyl-tRNA synthetase family. Tetramer of two alpha and two beta subunits.

The protein resides in the cytoplasm. The catalysed reaction is tRNA(Gly) + glycine + ATP = glycyl-tRNA(Gly) + AMP + diphosphate. The protein is Glycine--tRNA ligase alpha subunit of Proteus mirabilis (strain HI4320).